A 156-amino-acid polypeptide reads, in one-letter code: Small ribosomal subunit protein uS7 (156 aa).

Belongs to the universal ribosomal protein uS7 family. As to quaternary structure, part of the 30S ribosomal subunit. Contacts proteins S9 and S11.

One of the primary rRNA binding proteins, it binds directly to 16S rRNA where it nucleates assembly of the head domain of the 30S subunit. Is located at the subunit interface close to the decoding center, probably blocks exit of the E-site tRNA. The sequence is that of Small ribosomal subunit protein uS7 from Parvibaculum lavamentivorans (strain DS-1 / DSM 13023 / NCIMB 13966).